Here is a 233-residue protein sequence, read N- to C-terminus: MKKAVVLLSGGLDSTTCMSVAHKAGYELYPLSFDYGQRHQRELEAAKAVAQYYKVKEHRLIKIEHVGGSALTDASIQVPDYTEDGQIPVTYVPARNILFLSYALGYGEVMGAEAIFIGISSVDYSGYPDCRPEFLQAFQKVVDVGTKAGVSGQTIAIKAPLLYLSKAETIQLAAENGAPLHHTTSCYRGGEKACGTCDSCTLRLKGFAEAGIKDPIDYVNQGDRSCFSTPLED.

An ATP-binding site is contributed by 8 to 18 (LSGGLDSTTCM). Residues cysteine 186, cysteine 194, cysteine 197, and cysteine 200 each contribute to the Zn(2+) site.

It belongs to the QueC family. As to quaternary structure, homodimer. Requires Zn(2+) as cofactor.

The enzyme catalyses 7-carboxy-7-deazaguanine + NH4(+) + ATP = 7-cyano-7-deazaguanine + ADP + phosphate + H2O + H(+). The protein operates within purine metabolism; 7-cyano-7-deazaguanine biosynthesis. Catalyzes the ATP-dependent conversion of 7-carboxy-7-deazaguanine (CDG) to 7-cyano-7-deazaguanine (preQ(0)). This Desulfitobacterium hafniense (strain Y51) protein is 7-cyano-7-deazaguanine synthase 2.